The following is a 938-amino-acid chain: Isoleucine--tRNA ligase (938 aa).

A 'HIGH' region motif is present at residues 58–68 (PYANGNIHMGH). Glu-566 serves as a coordination point for L-isoleucyl-5'-AMP. Positions 607–611 (KMSKS) match the 'KMSKS' region motif. Residue Lys-610 participates in ATP binding. Residues Cys-906, Cys-909, Cys-926, and Cys-929 each contribute to the Zn(2+) site.

It belongs to the class-I aminoacyl-tRNA synthetase family. IleS type 1 subfamily. As to quaternary structure, monomer. It depends on Zn(2+) as a cofactor.

Its subcellular location is the cytoplasm. It carries out the reaction tRNA(Ile) + L-isoleucine + ATP = L-isoleucyl-tRNA(Ile) + AMP + diphosphate. Its function is as follows. Catalyzes the attachment of isoleucine to tRNA(Ile). As IleRS can inadvertently accommodate and process structurally similar amino acids such as valine, to avoid such errors it has two additional distinct tRNA(Ile)-dependent editing activities. One activity is designated as 'pretransfer' editing and involves the hydrolysis of activated Val-AMP. The other activity is designated 'posttransfer' editing and involves deacylation of mischarged Val-tRNA(Ile). The sequence is that of Isoleucine--tRNA ligase from Nitratidesulfovibrio vulgaris (strain ATCC 29579 / DSM 644 / CCUG 34227 / NCIMB 8303 / VKM B-1760 / Hildenborough) (Desulfovibrio vulgaris).